The following is a 158-amino-acid chain: Protein Smg homolog (158 aa).

This sequence belongs to the Smg family.

The sequence is that of Protein Smg homolog from Herminiimonas arsenicoxydans.